Here is a 209-residue protein sequence, read N- to C-terminus: Large ribosomal subunit protein bL25 (209 aa).

Residues 183 to 209 form a disordered region; the sequence is TAGERPAAEPAAAPGAAPAAGPEEAEE. The span at 184 to 209 shows a compositional bias: low complexity; the sequence is AGERPAAEPAAAPGAAPAAGPEEAEE.

The protein belongs to the bacterial ribosomal protein bL25 family. CTC subfamily. In terms of assembly, part of the 50S ribosomal subunit; part of the 5S rRNA/L5/L18/L25 subcomplex. Contacts the 5S rRNA. Binds to the 5S rRNA independently of L5 and L18.

Functionally, this is one of the proteins that binds to the 5S RNA in the ribosome where it forms part of the central protuberance. In Pelotomaculum thermopropionicum (strain DSM 13744 / JCM 10971 / SI), this protein is Large ribosomal subunit protein bL25.